A 155-amino-acid polypeptide reads, in one-letter code: MLKQVEIFTDGSCLGNPGPGGYGAILRYRGHEKTFSEGYSLTTNNRMELMAAIVALEALKEHCEVTLSTDSQYVRQGITQWIHNWKKRGWKTAEKKPVKNVDLWKRLDAALGQHQIKWEWVKGHAGHPENERCDELARAAAMNPTQEDVGYQAEA.

Residues 1–142 (MLKQVEIFTD…CDELARAAAM (142 aa)) form the RNase H type-1 domain. Residues Asp-10, Glu-48, Asp-70, and Asp-134 each contribute to the Mg(2+) site.

The protein belongs to the RNase H family. As to quaternary structure, monomer. Mg(2+) is required as a cofactor.

The protein localises to the cytoplasm. It carries out the reaction Endonucleolytic cleavage to 5'-phosphomonoester.. Functionally, endonuclease that specifically degrades the RNA of RNA-DNA hybrids. This is Ribonuclease H from Citrobacter koseri (strain ATCC BAA-895 / CDC 4225-83 / SGSC4696).